A 349-amino-acid chain; its full sequence is sn-glycerol-3-phosphate import ATP-binding protein UgpC (349 aa).

An ABC transporter domain is found at 4-235 (ITLKDVHKTY…PATAFVATFI (232 aa)). Position 37-44 (37-44 (GPSGCGKS)) interacts with ATP.

The protein belongs to the ABC transporter superfamily. sn-glycerol-3-phosphate importer (TC 3.A.1.1.3) family. In terms of assembly, the complex is composed of two ATP-binding proteins (UgpC), two transmembrane proteins (UgpA and UgpE) and a solute-binding protein (UgpB).

The protein localises to the cell inner membrane. The enzyme catalyses sn-glycerol 3-phosphate(out) + ATP + H2O = sn-glycerol 3-phosphate(in) + ADP + phosphate + H(+). Functionally, part of the ABC transporter complex UgpBAEC involved in sn-glycerol-3-phosphate (G3P) import. Responsible for energy coupling to the transport system. This chain is sn-glycerol-3-phosphate import ATP-binding protein UgpC, found in Rhizobium meliloti (strain 1021) (Ensifer meliloti).